The primary structure comprises 628 residues: Alpha pinene synthase, chloroplastic (628 aa).

A chloroplast-targeting transit peptide spans 1–46 (MSLGCITPLASAMVGPKLVRPLIHHNPLFHHKPLNRPYLQTKIPLR). Positions 381, 385, and 532 each coordinate Mg(2+). The DDXXD motif signature appears at 381–385 (DDMYD).

Belongs to the terpene synthase family. Tpsa subfamily. Requires Mg(2+) as cofactor. The cofactor is Mn(2+).

The protein resides in the plastid. The protein localises to the chloroplast. It carries out the reaction (2E)-geranyl diphosphate = alpha-pinene + diphosphate. Its pathway is secondary metabolite biosynthesis; terpenoid biosynthesis. Monoterpene synthase involved in the biosynthesis of volatile compounds. Mediates the conversion of (2E)-geranyl diphosphate (GPP) into alpha-pinene. The polypeptide is Alpha pinene synthase, chloroplastic (Chamaecyparis formosensis (Formosan cypress)).